The following is a 763-amino-acid chain: Ribonucleoside-diphosphate reductase subunit alpha (763 aa).

The ATP-cone domain maps to 5 to 95 (LFVTKRNGKK…IFHLRKKAYG (91 aa)). Residues Lys-9, 15–21 (EKINLDK), Thr-55, and Lys-91 each bind ATP. A GDP-binding site is contributed by Thr-209. Cys-225 and Cys-462 are disulfide-bonded. Residues 232–234 (DNL), Arg-262, and Arg-269 each bind dTTP. GDP is bound at residue Asn-437. Catalysis depends on Asn-437, which acts as the Proton acceptor. Cys-439 acts as the Cysteine radical intermediate in catalysis. GDP contacts are provided by residues Glu-441 and 623 to 625 (ETS). The active-site Proton acceptor is Glu-441.

Belongs to the ribonucleoside diphosphate reductase large chain family. In terms of assembly, tetramer of two alpha and two beta subunits.

It carries out the reaction a 2'-deoxyribonucleoside 5'-diphosphate + [thioredoxin]-disulfide + H2O = a ribonucleoside 5'-diphosphate + [thioredoxin]-dithiol. Its activity is regulated as follows. Under complex allosteric control mediated by deoxynucleoside triphosphates and ATP binding to separate specificity and activation sites on the alpha subunit. The type of nucleotide bound at the specificity site determines substrate preference. It seems probable that ATP makes the enzyme reduce CDP and UDP, dGTP favors ADP reduction and dTTP favors GDP reduction. Stimulated by ATP and inhibited by dATP binding to the activity site. In terms of biological role, provides the precursors necessary for DNA synthesis. Catalyzes the biosynthesis of deoxyribonucleotides from the corresponding ribonucleotides. In Buchnera aphidicola subsp. Schizaphis graminum (strain Sg), this protein is Ribonucleoside-diphosphate reductase subunit alpha (nrdA).